The chain runs to 269 residues: tRNA pseudouridine synthase A (269 aa).

Catalysis depends on D51, which acts as the Nucleophile. Y109 contacts substrate.

This sequence belongs to the tRNA pseudouridine synthase TruA family. Homodimer.

The enzyme catalyses uridine(38/39/40) in tRNA = pseudouridine(38/39/40) in tRNA. Its function is as follows. Formation of pseudouridine at positions 38, 39 and 40 in the anticodon stem and loop of transfer RNAs. The chain is tRNA pseudouridine synthase A from Histophilus somni (strain 129Pt) (Haemophilus somnus).